A 483-amino-acid polypeptide reads, in one-letter code: MRAQPAASHFVDGRPLEDAAGAPIPVIHPANGEEIARLHEATPAVIEAALASGARAQKDWAALRPVERARILRRASDLIRARNEELSILETLDTGKPLQETLVADWPSGADALEFFAGLAPAVTGETVPLGQDFVYTIREPLGLCVGIGAWNYPSQIACWKAAPALALGNAMVFKPSEVTPLGALKLAEILIEAGLPPGLFNVVQGRGAVGAALVSDSRVAKVSLTGSVPTGRRVYAAAAEGVRHVTMELGGKSPLIVFDDADLESAIGAAMLGNFYSSGQICSNGTRVFVQKGIKEAFLARLAERADAIQMGDPLDPEVQMGPLVSPAQLEKVLSYIEKARAEGGRLVCGGEASVSPGCYVQPTVFADVTDGMTLAREEVFGPVMAVLDFETEEEVIARANATDFGLAAGVFTADLTRAHRVVAQLQAGTCWINAYNLTPVEAPFGGVKMSGVGRENGRAAVEHYTQVKSVYVGMGPVDAPY.

The K(+) site is built by I27 and D93. 149–151 (GAW) is a binding site for NAD(+). Residue K161 is the Charge relay system of the active site. 175–178 (KPSE) is a binding site for NAD(+). Residue V179 participates in K(+) binding. NAD(+) is bound at residue 228–231 (SVPT). V243 contacts K(+). E249 (proton acceptor) is an active-site residue. Residues G251, C283, and E380 each contribute to the NAD(+) site. The active-site Nucleophile is C283. The residue at position 283 (C283) is a Cysteine sulfenic acid (-SOH). 2 residues coordinate K(+): K450 and G453. E457 (charge relay system) is an active-site residue.

This sequence belongs to the aldehyde dehydrogenase family. In terms of assembly, dimer of dimers. It depends on K(+) as a cofactor.

It catalyses the reaction betaine aldehyde + NAD(+) + H2O = glycine betaine + NADH + 2 H(+). The protein operates within amine and polyamine biosynthesis; betaine biosynthesis via choline pathway; betaine from betaine aldehyde: step 1/1. Its function is as follows. Involved in the biosynthesis of the osmoprotectant glycine betaine. Catalyzes the irreversible oxidation of betaine aldehyde to the corresponding acid. This is Betaine aldehyde dehydrogenase from Cereibacter sphaeroides (strain ATCC 17025 / ATH 2.4.3) (Rhodobacter sphaeroides).